Here is a 321-residue protein sequence, read N- to C-terminus: Malate dehydrogenase (321 aa).

Residues 10 to 15 (GSGMIG) and D34 contribute to the NAD(+) site. Substrate-binding residues include R83 and R89. NAD(+) is bound by residues N96 and 119–121 (ITN). Residues N121 and R152 each contribute to the substrate site. H176 acts as the Proton acceptor in catalysis.

Belongs to the LDH/MDH superfamily. MDH type 3 family.

It carries out the reaction (S)-malate + NAD(+) = oxaloacetate + NADH + H(+). Catalyzes the reversible oxidation of malate to oxaloacetate. In Chelativorans sp. (strain BNC1), this protein is Malate dehydrogenase.